We begin with the raw amino-acid sequence, 22 residues long: Chlorophyllase type 1 (22 aa).

This sequence belongs to the AB hydrolase superfamily. Lipase family.

The catalysed reaction is a chlorophyll + H2O = a chlorophyllide + phytol + H(+). It participates in porphyrin-containing compound metabolism; chlorophyll degradation. Functionally, catalyzes the hydrolysis of ester bond in chlorophyll to yield chlorophyllide and phytol. In Chenopodium album (Fat hen), this protein is Chlorophyllase type 1.